Reading from the N-terminus, the 686-residue chain is Protein arginine N-methyltransferase 7 (686 aa).

2 SAM-dependent MTase PRMT-type domains span residues Ser-5–Trp-352 and Asp-357–Asp-686.

It belongs to the class I-like SAM-binding methyltransferase superfamily. Protein arginine N-methyltransferase family. PRMT7 subfamily.

Essential arginine methyltransferase that can both catalyze the formation of omega-N monomethylarginine (MMA) and symmetrical dimethylarginine (sDMA). Specifically mediates the symmetrical dimethylation of arginine residues in the small nuclear ribonucleoproteins SmD1 and SmD3. In Aedes aegypti (Yellowfever mosquito), this protein is Protein arginine N-methyltransferase 7 (Art7).